The following is an 830-amino-acid chain: Periplasmic nitrate reductase (830 aa).

The tat-type signal signal peptide spans 1–32; the sequence is MELNRRDFMKANAAVAAAAAAGITIPVKNVHA. The 57-residue stretch at 39–95 folds into the 4Fe-4S Mo/W bis-MGD-type domain; the sequence is IRWDKAPCRYCGTGCSVLVGTKDGRVVATQGDPDAEVNRGLNCIKGYFLSKIMYGAD. The [4Fe-4S] cluster site is built by cysteine 46, cysteine 49, cysteine 53, and cysteine 81. Mo-bis(molybdopterin guanine dinucleotide) contacts are provided by residues lysine 83, glutamine 151, asparagine 176, cysteine 180, 213-220, 244-248, methionine 374, glutamine 378, asparagine 484, 510-511, lysine 533, aspartate 560, and 720-729; these read WGSNMAEM, STFEH, SD, and TGRVLEHWHT. Phenylalanine 796 contributes to the substrate binding site. Mo-bis(molybdopterin guanine dinucleotide)-binding residues include asparagine 804 and lysine 821.

It belongs to the prokaryotic molybdopterin-containing oxidoreductase family. NasA/NapA/NarB subfamily. As to quaternary structure, component of the periplasmic nitrate reductase NapAB complex composed of NapA and NapB. It depends on [4Fe-4S] cluster as a cofactor. The cofactor is Mo-bis(molybdopterin guanine dinucleotide). Predicted to be exported by the Tat system. The position of the signal peptide cleavage has not been experimentally proven.

The protein resides in the periplasm. The catalysed reaction is 2 Fe(II)-[cytochrome] + nitrate + 2 H(+) = 2 Fe(III)-[cytochrome] + nitrite + H2O. Catalytic subunit of the periplasmic nitrate reductase complex NapAB. Receives electrons from NapB and catalyzes the reduction of nitrate to nitrite. The sequence is that of Periplasmic nitrate reductase from Mannheimia succiniciproducens (strain KCTC 0769BP / MBEL55E).